Reading from the N-terminus, the 510-residue chain is Maturase K (510 aa).

It belongs to the intron maturase 2 family. MatK subfamily.

The protein resides in the plastid. It localises to the chloroplast. Usually encoded in the trnK tRNA gene intron. Probably assists in splicing its own and other chloroplast group II introns. The polypeptide is Maturase K (Taxus cuspidata (Japanese yew)).